We begin with the raw amino-acid sequence, 328 residues long: Carbonic anhydrase-related protein 11 (328 aa).

An N-terminal signal peptide occupies residues 1–23; sequence MGAAARLSAPRALVLWAALGAAA. The Alpha-carbonic anhydrase domain maps to 33–303; the sequence is DWWSYKDNLQ…LAHRALRGNR (271 aa). Residues N118, N170, and N260 are each glycosylated (N-linked (GlcNAc...) asparagine). The interval 299–328 is disordered; the sequence is LRGNRDPRHPERRCRGPNYRLHVDGVPHGR. A compositionally biased stretch (basic and acidic residues) spans 319-328; it reads LHVDGVPHGR.

It belongs to the alpha-carbonic anhydrase family. In terms of tissue distribution, expressed abundantly in the brain with moderate expression also present in spinal cord and thyroid.

The protein resides in the secreted. Does not have a catalytic activity. This Homo sapiens (Human) protein is Carbonic anhydrase-related protein 11 (CA11).